Here is a 120-residue protein sequence, read N- to C-terminus: MIVFSKYKTFWFFLIIGAIIPTLAFTTSKLLAPTVTTPEKKTSYESGIEPIGEAWIQFQIRYYMFALVFVIFDVETIFLYPWAMSFDQLGVYGFIEALIFVLILVIGLVYAWRKGALEWS.

The next 3 helical transmembrane spans lie at 10 to 30 (FWFF…TSKL), 64 to 84 (MFAL…PWAM), and 89 to 109 (LGVY…IGLV).

The protein belongs to the complex I subunit 3 family. NDH is composed of at least 16 different subunits, 5 of which are encoded in the nucleus.

Its subcellular location is the plastid. The protein localises to the chloroplast thylakoid membrane. It catalyses the reaction a plastoquinone + NADH + (n+1) H(+)(in) = a plastoquinol + NAD(+) + n H(+)(out). The catalysed reaction is a plastoquinone + NADPH + (n+1) H(+)(in) = a plastoquinol + NADP(+) + n H(+)(out). In terms of biological role, NDH shuttles electrons from NAD(P)H:plastoquinone, via FMN and iron-sulfur (Fe-S) centers, to quinones in the photosynthetic chain and possibly in a chloroplast respiratory chain. The immediate electron acceptor for the enzyme in this species is believed to be plastoquinone. Couples the redox reaction to proton translocation, and thus conserves the redox energy in a proton gradient. The polypeptide is NAD(P)H-quinone oxidoreductase subunit 3, chloroplastic (Chaetosphaeridium globosum (Charophycean green alga)).